We begin with the raw amino-acid sequence, 208 residues long: Holliday junction resolvase RecU (208 aa).

A disordered region spans residues 1-28 (MNYPNGKPYSKNKPLDGRKSSPFSSNIE). Positions 87, 89, 102, and 121 each coordinate Mg(2+).

The protein belongs to the RecU family. Mg(2+) is required as a cofactor.

The protein localises to the cytoplasm. The enzyme catalyses Endonucleolytic cleavage at a junction such as a reciprocal single-stranded crossover between two homologous DNA duplexes (Holliday junction).. Endonuclease that resolves Holliday junction intermediates in genetic recombination. Cleaves mobile four-strand junctions by introducing symmetrical nicks in paired strands. Promotes annealing of linear ssDNA with homologous dsDNA. Required for DNA repair, homologous recombination and chromosome segregation. The chain is Holliday junction resolvase RecU from Staphylococcus epidermidis (strain ATCC 12228 / FDA PCI 1200).